Here is a 140-residue protein sequence, read N- to C-terminus: Nucleoside diphosphate kinase (140 aa).

Positions 11, 59, 87, 93, 104, and 114 each coordinate ATP. The active-site Pros-phosphohistidine intermediate is the His117.

The protein belongs to the NDK family. In terms of assembly, homotetramer. Mg(2+) is required as a cofactor.

The protein resides in the cytoplasm. It catalyses the reaction a 2'-deoxyribonucleoside 5'-diphosphate + ATP = a 2'-deoxyribonucleoside 5'-triphosphate + ADP. The enzyme catalyses a ribonucleoside 5'-diphosphate + ATP = a ribonucleoside 5'-triphosphate + ADP. In terms of biological role, major role in the synthesis of nucleoside triphosphates other than ATP. The ATP gamma phosphate is transferred to the NDP beta phosphate via a ping-pong mechanism, using a phosphorylated active-site intermediate. The chain is Nucleoside diphosphate kinase from Rhodopseudomonas palustris (strain BisB5).